The primary structure comprises 121 residues: Small ribosomal subunit protein uS13 (121 aa).

The segment at 92-121 (RKGLPVRGQSSKTNARTVKGPRKTVANKKK) is disordered. Positions 110–121 (KGPRKTVANKKK) are enriched in basic residues.

The protein belongs to the universal ribosomal protein uS13 family. As to quaternary structure, part of the 30S ribosomal subunit. Forms a loose heterodimer with protein S19. Forms two bridges to the 50S subunit in the 70S ribosome.

In terms of biological role, located at the top of the head of the 30S subunit, it contacts several helices of the 16S rRNA. In the 70S ribosome it contacts the 23S rRNA (bridge B1a) and protein L5 of the 50S subunit (bridge B1b), connecting the 2 subunits; these bridges are implicated in subunit movement. Contacts the tRNAs in the A and P-sites. The chain is Small ribosomal subunit protein uS13 from Mycoplasma mycoides subsp. mycoides SC (strain CCUG 32753 / NCTC 10114 / PG1).